The chain runs to 354 residues: uncharacterized protein (354 aa).

It belongs to the asfivirus B354L family.

This is an uncharacterized protein from African swine fever virus (isolate Tick/South Africa/Pretoriuskop Pr4/1996) (ASFV).